We begin with the raw amino-acid sequence, 466 residues long: Fumarate hydratase class II (466 aa).

Substrate is bound by residues 99-101, 129-132, 139-141, and threonine 187; these read SGT, HPND, and SSN. Residue histidine 188 is the Proton donor/acceptor of the active site. Residue serine 318 is part of the active site. Substrate is bound by residues serine 319 and 324–326; that span reads KVN.

It belongs to the class-II fumarase/aspartase family. Fumarase subfamily. In terms of assembly, homotetramer.

Its subcellular location is the cytoplasm. The catalysed reaction is (S)-malate = fumarate + H2O. The protein operates within carbohydrate metabolism; tricarboxylic acid cycle; (S)-malate from fumarate: step 1/1. Involved in the TCA cycle. Catalyzes the stereospecific interconversion of fumarate to L-malate. This is Fumarate hydratase class II from Thermus aquaticus.